We begin with the raw amino-acid sequence, 256 residues long: Isoprenyl transferase (256 aa).

Asp-33 is a catalytic residue. Mg(2+) is bound at residue Asp-33. Substrate is bound by residues 34–37 (GNGR), Trp-38, Arg-46, His-50, and 78–80 (STE). Asn-81 serves as the catalytic Proton acceptor. Residues Trp-82, Arg-84, Arg-201, and 207–209 (RIS) each bind substrate. Glu-220 contributes to the Mg(2+) binding site.

It belongs to the UPP synthase family. As to quaternary structure, homodimer. The cofactor is Mg(2+).

In terms of biological role, catalyzes the condensation of isopentenyl diphosphate (IPP) with allylic pyrophosphates generating different type of terpenoids. The chain is Isoprenyl transferase from Staphylococcus haemolyticus (strain JCSC1435).